Reading from the N-terminus, the 239-residue chain is tRNA (guanine-N(1)-)-methyltransferase (239 aa).

S-adenosyl-L-methionine is bound by residues Gly108 and 127 to 132 (LGDYVL).

Belongs to the RNA methyltransferase TrmD family. In terms of assembly, homodimer.

It is found in the cytoplasm. The catalysed reaction is guanosine(37) in tRNA + S-adenosyl-L-methionine = N(1)-methylguanosine(37) in tRNA + S-adenosyl-L-homocysteine + H(+). Specifically methylates guanosine-37 in various tRNAs. This is tRNA (guanine-N(1)-)-methyltransferase from Streptococcus pneumoniae serotype 2 (strain D39 / NCTC 7466).